The primary structure comprises 347 residues: Integrin beta-1-binding protein 2 (347 aa).

Zn(2+) is bound by residues Cys-5, Cys-10, Cys-24, and His-27. A CHORD 1 domain is found at 5–64; it reads CRNKGCGQHFDPNTNLPDSCCHHPGVPIFHDALKGWSCCRKRTVDFSEFLNIKGCTMGPH. An SH3-binding motif is present at residues 28–31; that stretch reads PGVP. 4 residues coordinate Zn(2+): Cys-42, Cys-43, Cys-59, and His-64. An SH3-binding motif is present at residues 70–78; that stretch reads PEAPQPEGP. 2 residues coordinate Zn(2+): Cys-149 and Cys-154. The CHORD 2 domain occupies 149–208; the sequence is CQNPGCDAVYQGPESDATPCTYHPGAPRFHEGMKSWSCCGIQTLDFGAFLAQPGCRVGRH. Positions 158–161 match the SH2-binding motif; sequence YQGP. Residues Cys-168 and His-171 each contribute to the Zn(2+) site. The SH3-binding motif lies at 172 to 175; the sequence is PGAP. Residues Cys-186, Cys-187, Cys-203, and His-208 each contribute to the Zn(2+) site. One can recognise a CS domain in the interval 215–304; it reads PASCRHDWHQ…ADPGSWAQLE (90 aa). An SH2-binding motif is present at residues 234–237; sequence YGQI. The tract at residues 319 to 347 is disordered; the sequence is LEMDEEESDDSDDDLSWTEEEEEEEAMGE. Residues 320–347 show a composition bias toward acidic residues; the sequence is EMDEEESDDSDDDLSWTEEEEEEEAMGE.

In terms of assembly, interacts with beta-1 integrin subunit. This interaction is regulated by divalent cations, and it occurs only in absence of calcium. As to expression, expressed in skeletal and cardiac muscles but not in other tissues.

Its function is as follows. May play a role during maturation and/or organization of muscles cells. This is Integrin beta-1-binding protein 2 (ITGB1BP2) from Homo sapiens (Human).